The sequence spans 115 residues: NADH-ubiquinone oxidoreductase chain 3 (115 aa).

Transmembrane regions (helical) follow at residues 4-24 (IMAM…AFWL), 55-75 (FFLV…LLPL), and 84-104 (MFLT…GLAY).

It belongs to the complex I subunit 3 family. Core subunit of respiratory chain NADH dehydrogenase (Complex I) which is composed of 45 different subunits. Interacts with TMEM186. Interacts with TMEM242.

It is found in the mitochondrion inner membrane. The enzyme catalyses a ubiquinone + NADH + 5 H(+)(in) = a ubiquinol + NAD(+) + 4 H(+)(out). Its function is as follows. Core subunit of the mitochondrial membrane respiratory chain NADH dehydrogenase (Complex I) which catalyzes electron transfer from NADH through the respiratory chain, using ubiquinone as an electron acceptor. Essential for the catalytic activity of complex I. This Phyllotis darwinii (Darwin's leaf-eared mouse) protein is NADH-ubiquinone oxidoreductase chain 3.